Here is a 339-residue protein sequence, read N- to C-terminus: Mycothiol acetyltransferase (339 aa).

2 N-acetyltransferase domains span residues 8–174 (YEQL…QGLT) and 176–339 (LTYP…GELN). E39 contacts 1D-myo-inositol 2-(L-cysteinylamino)-2-deoxy-alpha-D-glucopyranoside. 85–87 (LAV) contacts acetyl-CoA. 1D-myo-inositol 2-(L-cysteinylamino)-2-deoxy-alpha-D-glucopyranoside-binding residues include E207, K254, and E270. Residue 274–276 (VCL) coordinates acetyl-CoA. A 1D-myo-inositol 2-(L-cysteinylamino)-2-deoxy-alpha-D-glucopyranoside-binding site is contributed by Y308.

Belongs to the acetyltransferase family. MshD subfamily. As to quaternary structure, monomer.

The enzyme catalyses 1D-myo-inositol 2-(L-cysteinylamino)-2-deoxy-alpha-D-glucopyranoside + acetyl-CoA = mycothiol + CoA + H(+). In terms of biological role, catalyzes the transfer of acetyl from acetyl-CoA to desacetylmycothiol (Cys-GlcN-Ins) to form mycothiol. The polypeptide is Mycothiol acetyltransferase (Corynebacterium urealyticum (strain ATCC 43042 / DSM 7109)).